Reading from the N-terminus, the 509-residue chain is MEEIQRYLQPDRSQQHNFLYPLIFQEYIYALAHDHGLNRNRSILLENPGYNNKLSFLIVKRLITRMYQQNHFLISTNDSNKNSFLGCNKSLYSQMISEGFAFIVEIPFSLRLISSLSSFEGKKIFKSHNLRSIHSTFPFLEDNFSHLNYVLDILIPYPVHLEILVQTLRYWVKDASSLHLLRFFLHEYWNLNSLITSKKPGYSFSKKNQRFFFFLYNSYVYECESTFVFLRNQSSHLRSTSFGALLERIYFYGKIERLVEVFAKDFQVTLWLFKDPFMHYVRYQGKSILASKGTFLLMNKWKFYLVNFWQCHFSLCFHTGRIHINQLSNHSRDFMGYLSSVRLNPSMVRSQMLENSFLINNAIKKFDTLVPIIPLIGSLAKANFCTVLGHPISKPVWSDLSDSDIIDRFGRICRNLFHYYSGSSKKKTLYRIKYILRLSCARTLARKHKSTVRTFLKRSGSELLEEFLTSEEQVLSLTFPRASSSLWGVYRSRIWYLDIFCINDLANYQ.

It belongs to the intron maturase 2 family. MatK subfamily.

It is found in the plastid. The protein resides in the chloroplast. Its function is as follows. Usually encoded in the trnK tRNA gene intron. Probably assists in splicing its own and other chloroplast group II introns. In Nicotiana plumbaginifolia (Leadwort-leaved tobacco), this protein is Maturase K.